The chain runs to 360 residues: Neutral protease 2 homolog SS1G_13741 (360 aa).

Asparagine 129 carries N-linked (GlcNAc...) asparagine glycosylation. 2 disulfide bridges follow: cysteine 189–cysteine 261 and cysteine 268–cysteine 286. Zn(2+) is bound at residue histidine 311. Glutamate 312 is an active-site residue. 2 residues coordinate Zn(2+): histidine 315 and aspartate 326.

This sequence belongs to the peptidase M35 family. It depends on Zn(2+) as a cofactor.

Its subcellular location is the secreted. It carries out the reaction Preferential cleavage of bonds with hydrophobic residues in P1'. Also 3-Asn-|-Gln-4 and 8-Gly-|-Ser-9 bonds in insulin B chain.. Its function is as follows. Secreted metalloproteinase that allows assimilation of proteinaceous substrates. Shows high activities on basic nuclear substrates such as histone and protamine. The polypeptide is Neutral protease 2 homolog SS1G_13741 (Sclerotinia sclerotiorum (strain ATCC 18683 / 1980 / Ss-1) (White mold)).